An 860-amino-acid polypeptide reads, in one-letter code: Alanine--tRNA ligase (860 aa).

Residues His563, His567, Cys665, and His669 each coordinate Zn(2+).

It belongs to the class-II aminoacyl-tRNA synthetase family. Zn(2+) serves as cofactor.

It localises to the cytoplasm. The enzyme catalyses tRNA(Ala) + L-alanine + ATP = L-alanyl-tRNA(Ala) + AMP + diphosphate. Its function is as follows. Catalyzes the attachment of alanine to tRNA(Ala) in a two-step reaction: alanine is first activated by ATP to form Ala-AMP and then transferred to the acceptor end of tRNA(Ala). Also edits incorrectly charged Ser-tRNA(Ala) and Gly-tRNA(Ala) via its editing domain. In Vibrio cholerae serotype O1 (strain ATCC 39541 / Classical Ogawa 395 / O395), this protein is Alanine--tRNA ligase.